Here is a 318-residue protein sequence, read N- to C-terminus: L-malyl-CoA/beta-methylmalyl-CoA lyase (318 aa).

The substrate site is built by Phe-19, Arg-24, Lys-30, and Arg-76. 2 residues coordinate Mg(2+): Glu-141 and Asp-168. Residues 167–168 (AD) and 251–252 (IH) each bind substrate.

Belongs to the HpcH/HpaI aldolase family. As to quaternary structure, homohexamer. Dimer of trimers. Requires Mg(2+) as cofactor. Mn(2+) is required as a cofactor.

It catalyses the reaction (S)-malyl-CoA = glyoxylate + acetyl-CoA. It carries out the reaction (2R,3S)-beta-methylmalyl-CoA = propanoyl-CoA + glyoxylate. In terms of biological role, involved in the ethylmalonyl-CoA pathway for acetate assimilation. Catalyzes the reversible condensation of glyoxylate and acetyl-CoA to L-malyl-CoA and the reversible condensation of glyoxylate and propionyl-CoA to yield beta-methylmalyl-CoA. The chain is L-malyl-CoA/beta-methylmalyl-CoA lyase from Cereibacter sphaeroides (strain ATCC 17029 / ATH 2.4.9) (Rhodobacter sphaeroides).